The following is a 192-amino-acid chain: UPF0149 protein YgfB (192 aa).

The protein belongs to the UPF0149 family.

The protein is UPF0149 protein YgfB of Escherichia coli O127:H6 (strain E2348/69 / EPEC).